We begin with the raw amino-acid sequence, 510 residues long: Beta-glucosidase 26 (510 aa).

Positions 1 to 27 (MRKFIAALRLALAAAAHLLLTLPPAQC) are cleaved as a signal peptide. Gln-59 contributes to the a beta-D-glucoside binding site. 2 N-linked (GlcNAc...) asparagine glycosylation sites follow: Asn-87 and Asn-127. A beta-D-glucoside contacts are provided by residues His-160 and 205-206 (NE). The active-site Proton donor is Glu-206. A disulfide bond links Cys-225 and Cys-228. The N-linked (GlcNAc...) asparagine glycan is linked to Asn-233. The a beta-D-glucoside site is built by Tyr-345 and Glu-416. Glu-416 functions as the Nucleophile in the catalytic mechanism. The N-linked (GlcNAc...) asparagine glycan is linked to Asn-424. A beta-D-glucoside contacts are provided by residues Trp-463, 470 to 471 (EW), and Phe-479.

It belongs to the glycosyl hydrolase 1 family.

The catalysed reaction is Hydrolysis of terminal, non-reducing beta-D-glucosyl residues with release of beta-D-glucose.. Its function is as follows. Hydrolyzes p-nitrophenyl beta-D-glucoside, p-nitrophenyl beta-D-mannoside, p-nitrophenyl beta-D-galactoside, p-nitrophenyl beta-D-xyloside, p-nitrophenyl beta-D-fucoside, p-nitrophenyl beta-L-arabinoside, cello-oligosaccharides, laminari-oligosaccharides and sophorose. This is Beta-glucosidase 26 (BGLU26) from Oryza sativa subsp. japonica (Rice).